The sequence spans 703 residues: Peptide transporter CstA (703 aa).

The next 16 membrane-spanning stretches (helical) occupy residues 6–26 (TKILWLFVAALGAICFGYLAL), 29–49 (GESVSAIYLVVAAVCIYMIGY), 87–107 (VLFGHHFAAIAGAGPLVGPIL), 118–138 (LWILVGGVLAGAVHDFVVLFI), 162–182 (VAMVAIFGIMLIIIAILAMVV), 190–210 (PWGLFTIAMTIPIAIFMGIYM), 221–241 (ASIIGFVLLILAIHYGSVIAA), 256–276 (LAIVMMAYGFIASVLPVWFLL), 282–302 (LSTFLKIGVIVVMAVAIVLVA), 319–339 (GPVFAGGVFPFLFITIACGAI), 374–394 (AVAIMALICACILHPGLYFAI), 463–483 (LMAFWYHFAILFEALFILTAV), 514–534 (GLLATALSVAGWGYFLYQGAI), 547–567 (FGVSNQMLAGMALLLATTILV), 574–594 (YTWVTLVPAVFVLVATLYGGI), and 660–680 (AILCVFFMIATLLVIISCIGI).

It belongs to the peptide transporter carbon starvation (CstA) (TC 2.A.114) family.

It is found in the cell inner membrane. In terms of biological role, involved in the uptake of dipeptides and tripeptides. May influence host-pathogen interactions. Involved in motility and agglutination, and has a role in stimulation of dendritic cells. This Campylobacter jejuni subsp. jejuni serotype O:2 (strain ATCC 700819 / NCTC 11168) protein is Peptide transporter CstA.